We begin with the raw amino-acid sequence, 380 residues long: Queuine tRNA-ribosyltransferase (380 aa).

Aspartate 96 (proton acceptor) is an active-site residue. Residues 96–100 (DSGGF), aspartate 150, glutamine 193, and glycine 220 each bind substrate. The tract at residues 251–257 (GVGAPDS) is RNA binding. Aspartate 270 (nucleophile) is an active-site residue. The segment at 275-279 (TRIAR) is RNA binding; important for wobble base 34 recognition. The Zn(2+) site is built by cysteine 308, cysteine 310, cysteine 313, and histidine 339.

Belongs to the queuine tRNA-ribosyltransferase family. As to quaternary structure, homodimer. Within each dimer, one monomer is responsible for RNA recognition and catalysis, while the other monomer binds to the replacement base PreQ1. The cofactor is Zn(2+).

The enzyme catalyses 7-aminomethyl-7-carbaguanine + guanosine(34) in tRNA = 7-aminomethyl-7-carbaguanosine(34) in tRNA + guanine. It participates in tRNA modification; tRNA-queuosine biosynthesis. Catalyzes the base-exchange of a guanine (G) residue with the queuine precursor 7-aminomethyl-7-deazaguanine (PreQ1) at position 34 (anticodon wobble position) in tRNAs with GU(N) anticodons (tRNA-Asp, -Asn, -His and -Tyr). Catalysis occurs through a double-displacement mechanism. The nucleophile active site attacks the C1' of nucleotide 34 to detach the guanine base from the RNA, forming a covalent enzyme-RNA intermediate. The proton acceptor active site deprotonates the incoming PreQ1, allowing a nucleophilic attack on the C1' of the ribose to form the product. After dissociation, two additional enzymatic reactions on the tRNA convert PreQ1 to queuine (Q), resulting in the hypermodified nucleoside queuosine (7-(((4,5-cis-dihydroxy-2-cyclopenten-1-yl)amino)methyl)-7-deazaguanosine). The chain is Queuine tRNA-ribosyltransferase from Streptococcus thermophilus (strain ATCC BAA-250 / LMG 18311).